Reading from the N-terminus, the 182-residue chain is Large ribosomal subunit protein uL6 (182 aa).

This sequence belongs to the universal ribosomal protein uL6 family. Part of the 50S ribosomal subunit.

Its function is as follows. This protein binds to the 23S rRNA, and is important in its secondary structure. It is located near the subunit interface in the base of the L7/L12 stalk, and near the tRNA binding site of the peptidyltransferase center. This chain is Large ribosomal subunit protein uL6, found in Dehalococcoides mccartyi (strain ATCC BAA-2266 / KCTC 15142 / 195) (Dehalococcoides ethenogenes (strain 195)).